Consider the following 513-residue polypeptide: ATP synthase subunit alpha (513 aa).

Residue 169–176 (GDRQTGKT) coordinates ATP.

This sequence belongs to the ATPase alpha/beta chains family. In terms of assembly, F-type ATPases have 2 components, CF(1) - the catalytic core - and CF(0) - the membrane proton channel. CF(1) has five subunits: alpha(3), beta(3), gamma(1), delta(1), epsilon(1). CF(0) has three main subunits: a(1), b(2) and c(9-12). The alpha and beta chains form an alternating ring which encloses part of the gamma chain. CF(1) is attached to CF(0) by a central stalk formed by the gamma and epsilon chains, while a peripheral stalk is formed by the delta and b chains.

It localises to the cell inner membrane. It catalyses the reaction ATP + H2O + 4 H(+)(in) = ADP + phosphate + 5 H(+)(out). Produces ATP from ADP in the presence of a proton gradient across the membrane. The alpha chain is a regulatory subunit. The chain is ATP synthase subunit alpha from Actinobacillus succinogenes (strain ATCC 55618 / DSM 22257 / CCUG 43843 / 130Z).